We begin with the raw amino-acid sequence, 429 residues long: MTQTLRLTALDEMFITDDIDIVPSVQIEARVSGRFDLDRLAAALRAAVAKHALARARLGRASLTARTLYWEVPDRADHLAVEITDEPVGEVRSRFYARAPELHRSPVFAVAVVRETVGDRLLLNFHHAAFDGMGGLRLLLSLARAYAGEPDEVGGPPIEEARNLKGVAGSRDLFDVLIRARGLAKPAIDRKRTTRVAPDGGSPDGPRFVFAPLTIESDEMATAVARRPEGATVNDLAMAALALTILQWNRTHDVPAADSVSVNMPVNFRPTAWSTEVISNFASYLAIVLRVDEVTDLEKATAIVAGITGPLKQSGAAGWVVDLLEGGKVLPAMLKRQLQLLLPLVEDRFVESVCLSNLGRVDVPAFGGEAGDTTEVWFSPTAAMSVMPIGVGLVGFGGTLRAMFRGDGRTIGGEALGRFAALYRDTLLT.

This is an uncharacterized protein from Mycobacterium tuberculosis (strain CDC 1551 / Oshkosh).